Consider the following 142-residue polypeptide: Lutropin subunit beta (142 aa).

The N-terminal stretch at 1-21 (MEMLQGLLLLWLLLNVGGVWT) is a signal peptide. 6 cysteine pairs are disulfide-bonded: Cys30–Cys78, Cys44–Cys93, Cys47–Cys131, Cys55–Cys109, Cys59–Cys111, and Cys114–Cys121. Asn34 carries N-linked (GlcNAc...) asparagine glycosylation.

It belongs to the glycoprotein hormones subunit beta family. In terms of assembly, heterodimer of a common alpha chain and a unique beta chain which confers biological specificity to thyrotropin, lutropin, follitropin and gonadotropin.

It localises to the secreted. Promotes spermatogenesis and ovulation by stimulating the testes and ovaries to synthesize steroids. The polypeptide is Lutropin subunit beta (LHB) (Panthera tigris altaica (Siberian tiger)).